We begin with the raw amino-acid sequence, 259 residues long: Probable UMP-CMP kinase 2 (259 aa).

Gly63 to Thr68 contributes to the ATP binding site. The tract at residues Ser83–Val112 is NMP. A ribonucleoside 5'-phosphate is bound by residues Arg89, Lys110–Val112, and Gly137–Arg140. Asn144 provides a ligand contact to CMP. The segment at Asn175–Asp183 is LID. Arg176 is an ATP binding site. Arg180 and Arg191 together coordinate a ribonucleoside 5'-phosphate. Gly219 provides a ligand contact to ATP.

It belongs to the adenylate kinase family. UMP-CMP kinase subfamily. As to quaternary structure, monomer. Mg(2+) is required as a cofactor.

Its subcellular location is the cytoplasm. It localises to the nucleus. The enzyme catalyses CMP + ATP = CDP + ADP. It catalyses the reaction dCMP + ATP = dCDP + ADP. It carries out the reaction UMP + ATP = UDP + ADP. In terms of biological role, catalyzes the phosphorylation of pyrimidine nucleoside monophosphates at the expense of ATP. Plays an important role in de novo pyrimidine nucleotide biosynthesis. Has preference for UMP and CMP as phosphate acceptors. The polypeptide is Probable UMP-CMP kinase 2 (UMK2) (Arabidopsis thaliana (Mouse-ear cress)).